We begin with the raw amino-acid sequence, 492 residues long: Metal cation symporter ZIP14 (492 aa).

The signal sequence occupies residues 1–30; that stretch reads MKLLLLHPAFQSCLLLTLLGLWRTTPEAHA. At 31–157 the chain is on the extracellular side; it reads SSLGAPAISA…PSAVEVWGYG (127 aa). 3 N-linked (GlcNAc...) asparagine glycosylation sites follow: N77, N87, and N102. A helical transmembrane segment spans residues 158-178; that stretch reads LLCVTVISLCSLLGASVVPFM. The Cytoplasmic portion of the chain corresponds to 179–186; sequence KKTFYKRL. The helical transmembrane segment at 187 to 207 threads the bilayer; sequence LLYFIALAIGTLYSNALFQLI. Residues 208–224 lie on the Extracellular side of the membrane; the sequence is PEAFGFNPLEDYYVSKS. A helical transmembrane segment spans residues 225–245; sequence AVVFGGFYLFFFTEKILKILL. Over 246 to 397 the chain is Cytoplasmic; the sequence is KQKNEHHHGH…LLNAGMSIQQ (152 aa). Residues 251 to 258 carry the HHHGHXHX-motif motif; sequence HHHGHSHY. Residues 376–381 carry the XEXPHE-motif motif; it reads EEFPHE. The chain crosses the membrane as a helical span at residues 398-418; the sequence is ALFFNFLSACCCYLGLAFGIL. Residues 419 to 424 lie on the Extracellular side of the membrane; it reads AGSHFS. Residues 425–445 form a helical membrane-spanning segment; that stretch reads ANWIFALAGGMFLYISLADMF. At 446–460 the chain is on the cytoplasmic side; it reads PEMNEVCQEDERKGS. A helical membrane pass occupies residues 461 to 481; sequence ILIPFIIQNLGLLTGFTIMVV. The Extracellular segment spans residues 482 to 492; it reads LTMYSGQIQIG.

Belongs to the ZIP transporter (TC 2.A.5) family. As to quaternary structure, homotrimer. In terms of processing, ubiquitinated. Ubiquitination occurs upon iron depletion. The ubiquitinated form undergoes proteasomal degradation. Post-translationally, N-glycosylated. N-glycosylation at Asn-102 is required for iron-regulated extraction of the transporter from membranes and subsequent proteasomal degradation. In terms of tissue distribution, ubiquitously expressed, with higher expression in liver, pancreas, fetal liver, thyroid gland, left and right ventricle, right atrium and fetal heart. Weakly expressed in spleen, thymus, and peripheral blood leukocytes. Expressed in liver and in brain by large neurons in the globus pallidus, the insular cortex and the dentate nucleus and to a lower extent in the putamen and the caudate nucleus (at protein level). Expressed in osteoblasts and giant osteoclast-like cells, but not in osteocytes found osteoblastoma and giant cell tumors (at protein level). Expressed by microvascular capillary endothelial cells that constitute the blood-brain barrier (at protein level). Expressed by macrophages. As to expression, widely expressed but not detected in brain, heart, skeletal muscle, placenta and fetal skin.

It is found in the cell membrane. The protein resides in the apical cell membrane. Its subcellular location is the basolateral cell membrane. It localises to the early endosome membrane. The protein localises to the late endosome membrane. It is found in the lysosome membrane. It carries out the reaction Zn(2+)(out) + 2 hydrogencarbonate(out) = Zn(2+)(in) + 2 hydrogencarbonate(in). The catalysed reaction is Mn(2+)(out) + 2 hydrogencarbonate(out) = Mn(2+)(in) + 2 hydrogencarbonate(in). It catalyses the reaction Fe(2+)(out) + 2 hydrogencarbonate(out) = Fe(2+)(in) + 2 hydrogencarbonate(in). The enzyme catalyses Cd(2+)(out) + 2 hydrogencarbonate(out) = Cd(2+)(in) + 2 hydrogencarbonate(in). In terms of biological role, electroneutral transporter of the plasma membrane mediating the cellular uptake of the divalent metal cations zinc, manganese and iron that are important for tissue homeostasis, metabolism, development and immunity. Functions as an energy-dependent symporter, transporting through the membranes an electroneutral complex composed of a divalent metal cation and two bicarbonate anions. Beside these endogenous cellular substrates, can also import cadmium a non-essential metal which is cytotoxic and carcinogenic. Controls the cellular uptake by the intestinal epithelium of systemic zinc, which is in turn required to maintain tight junctions and the intestinal permeability. Modifies the activity of zinc-dependent phosphodiesterases, thereby indirectly regulating G protein-coupled receptor signaling pathways important for gluconeogenesis and chondrocyte differentiation. Regulates insulin receptor signaling, glucose uptake, glycogen synthesis and gluconeogenesis in hepatocytes through the zinc-dependent intracellular catabolism of insulin. Through zinc cellular uptake also plays a role in the adaptation of cells to endoplasmic reticulum stress. Major manganese transporter of the basolateral membrane of intestinal epithelial cells, it plays a central role in manganese systemic homeostasis through intestinal manganese uptake. Also involved in manganese extracellular uptake by cells of the blood-brain barrier. May also play a role in manganese and zinc homeostasis participating in their elimination from the blood through the hepatobiliary excretion. Also functions in the extracellular uptake of free iron. May also function intracellularly and mediate the transport from endosomes to cytosol of iron endocytosed by transferrin. Plays a role in innate immunity by regulating the expression of cytokines by activated macrophages. The sequence is that of Metal cation symporter ZIP14 from Homo sapiens (Human).